The chain runs to 407 residues: Growth/differentiation factor 11 (407 aa).

The signal sequence occupies residues 1-24; it reads MVLAAPLLLGFLLLALELRPRGEA. A propeptide spanning residues 25 to 298 is cleaved from the precursor; that stretch reads AEGPAAAAAA…VLENTKRSRR (274 aa). A glycan (N-linked (GlcNAc...) asparagine) is linked at Asn-94. 4 disulfide bridges follow: Cys-304/Cys-314, Cys-313/Cys-372, Cys-341/Cys-404, and Cys-345/Cys-406.

The protein belongs to the TGF-beta family. In terms of assembly, homodimer; disulfide-linked. Interacts directly with ACVR2B. Interacts directly with ACVR2A. Interacts with ACVR1B, TGFBR1 and ACVR1C in an ACVR2B-dependent manner. Interacts with FST isoform 2/FS-288. Post-translationally, synthesized as large precursor molecule that undergoes proteolytic cleavage by furin-like proteases. This produces an inactive form consisting of the mature C-terminal portion non-covalently bound to its cleaved N-terminal propeptide. Activation of the mature form requires additional cleavage of the propeptide by a tolloid-like metalloproteinase. As to expression, in the embryo, strong expression is seen in the palatal epithelia, including the medial edge epithelial and midline epithelial seam of the palatal shelves. Less pronounced expression is also seen throughout the palatal shelf and tongue mesenchyme.

It localises to the secreted. Secreted signal that acts globally to regulate anterior/posterior axial patterning during development. May play critical roles in patterning both mesodermal and neural tissues. It is required for proper vertebral patterning and orofacial development. Signals through activin receptors type-2, ACVR2A and ACVR2B, and activin receptors type-1, ACVR1B, ACVR1C and TGFBR1 leading to the phosphorylation of SMAD2 and SMAD3. The protein is Growth/differentiation factor 11 (GDF11) of Homo sapiens (Human).